The following is an 88-amino-acid chain: MANTPSARKAVRKVAARTQVNKARRSRVRTFMRKFDDALAGGDKASAEIAFKNFEPEIMRAVSKGVFHKNTAARKVSRLAKRLKALSV.

It belongs to the bacterial ribosomal protein bS20 family.

Its function is as follows. Binds directly to 16S ribosomal RNA. The chain is Small ribosomal subunit protein bS20 from Bartonella tribocorum (strain CIP 105476 / IBS 506).